The sequence spans 449 residues: Cytochrome P450 monooxygenase iliC (449 aa).

A helical transmembrane segment spans residues 28–44; the sequence is TFAITFMGVKQICTIEG. Cys397 provides a ligand contact to heme.

It belongs to the cytochrome P450 family. Requires heme as cofactor.

The protein localises to the membrane. It catalyses the reaction (3E,5S)-3-[(2E,4E,8S,10E,12Z)-1-hydroxy-4,8-dimethyltetradeca-2,4,10,12-tetraen-1-ylidene]-5-[(4-hydroxyphenyl)methyl]pyrrolidine-2,4-dione + reduced [NADPH--hemoprotein reductase] + O2 = 3-[(2E,4E,8S,10E,12Z)-4,8-dimethyltetradeca-2,4,10,12-tetraenoyl]-4-hydroxy-5-(4-hydroxyphenyl)-1,2-dihydropyridin-2-one + oxidized [NADPH--hemoprotein reductase] + 2 H2O. It functions in the pathway mycotoxin biosynthesis. Functionally, cytochrome P450 monooxygenase; part of the gene cluster that mediates the biosynthesis of ilicicolin H, a 4-hydroxy-2-pyridonealkaloid that has potent and broad antifungal activities by inhibiting the mitochondrial respiration chain. IliC catalyzes the ring expansion of the tetramate intermediate to the acyclic 2-pyridone intermediate that contains the trans bis-diene chain. The biosynthesis of ilicicolin H starts with formation of the tetramic acid by the hybrid PKS-NRPS synthetase iliA with the partnering trans-enoyl reductase iliB since iliA lacks a designated enoylreductase (ER) domain. The cytochrome P450 monooxygenase iliC then catalyzes the ring expansion of the tetramate to the acyclic 2-pyridone. The pericyclase iliD further converts the acyclic 2-pyridone into 8-epi-ilicicolin H. 8-epi-ilicicolin H might then spontaneously convert to ilicicolin H since ilicicolin H is produced in the absence of the epimerase iliE, in contrast to what was observed for the Talaromyces variabilis ilicolin H biosynthetic pathway. This is Cytochrome P450 monooxygenase iliC from Hypocrea jecorina (strain QM6a) (Trichoderma reesei).